A 951-amino-acid chain; its full sequence is AP-1 complex subunit beta-1 (951 aa).

Lys-318 bears the N6-acetyllysine mark. Tyr-574 carries the 3'-nitrotyrosine modification.

The protein belongs to the adaptor complexes large subunit family. Adaptor protein complex 1 (AP-1) is a heterotetramer composed of two large adaptins (gamma-type subunit AP1G1 and beta-type subunit AP1B1), a medium adaptin (mu-type subunit AP1M1 or AP1M2) and a small adaptin (sigma-type subunit AP1S1 or AP1S2 or AP1S3).

The protein localises to the cytoplasmic vesicle. The protein resides in the clathrin-coated vesicle membrane. Its subcellular location is the golgi apparatus. Its function is as follows. Subunit of clathrin-associated adaptor protein complex 1 that plays a role in protein sorting in the late-Golgi/trans-Golgi network (TGN) and/or endosomes. The AP complexes mediate both the recruitment of clathrin to membranes and the recognition of sorting signals within the cytosolic tails of transmembrane cargo molecules. The sequence is that of AP-1 complex subunit beta-1 (AP2B1) from Bos taurus (Bovine).